The chain runs to 315 residues: Homoserine kinase (315 aa).

Residue 97 to 107 coordinates ATP; that stretch reads PPARGLGSSAT.

This sequence belongs to the GHMP kinase family. Homoserine kinase subfamily.

The protein resides in the cytoplasm. It catalyses the reaction L-homoserine + ATP = O-phospho-L-homoserine + ADP + H(+). It functions in the pathway amino-acid biosynthesis; L-threonine biosynthesis; L-threonine from L-aspartate: step 4/5. Catalyzes the ATP-dependent phosphorylation of L-homoserine to L-homoserine phosphate. The protein is Homoserine kinase of Prochlorococcus marinus (strain NATL1A).